Here is a 340-residue protein sequence, read N- to C-terminus: Phosphoribosylformylglycinamidine cyclo-ligase (340 aa).

Belongs to the AIR synthase family.

It is found in the cytoplasm. The catalysed reaction is 2-formamido-N(1)-(5-O-phospho-beta-D-ribosyl)acetamidine + ATP = 5-amino-1-(5-phospho-beta-D-ribosyl)imidazole + ADP + phosphate + H(+). The protein operates within purine metabolism; IMP biosynthesis via de novo pathway; 5-amino-1-(5-phospho-D-ribosyl)imidazole from N(2)-formyl-N(1)-(5-phospho-D-ribosyl)glycinamide: step 2/2. This Streptococcus pneumoniae (strain P1031) protein is Phosphoribosylformylglycinamidine cyclo-ligase.